The chain runs to 326 residues: MVSQTVSVAVTGGTGQIAYSFLFSLAHGDVFGLDCGIDLRIYDIPGTERALSGVRMELDDGAFPLLQRVQVTTSLHDAFDGIDAAFLIGSVPRGPGMERRDLLKKNGEIFATQGKALNTTAKRDAKIFVVGNPVNTNCWIAMNHAPRLLRKNFHAMLRLDQNRMHSMLSHRAEVPLSAVSQVVVWGNHSAKQVPDFTQALINDRPIAETIADRDWLENIMVPSVQSRGSAVIEARGKSSAASAARALAEAARSIYQPKEGEWFSSGVCSDHNPYGLPEDLIFGFPCRMLATGEYEVIPRLPWDAFIRGKMQISLDEILQEKASVSL.

12 to 18 (GGTGQIA) is an NAD(+) binding site. Residues R93 and R99 each coordinate substrate. NAD(+) contacts are provided by residues N106, Q113, and 130 to 132 (VGN). N132 and R163 together coordinate substrate. Residue H188 is the Proton acceptor of the active site.

It belongs to the LDH/MDH superfamily. MDH type 2 family.

It carries out the reaction (S)-malate + NAD(+) = oxaloacetate + NADH + H(+). Functionally, catalyzes the reversible oxidation of malate to oxaloacetate. The protein is Malate dehydrogenase of Chlamydia trachomatis serovar D (strain ATCC VR-885 / DSM 19411 / UW-3/Cx).